The chain runs to 200 residues: 3-isopropylmalate dehydratase small subunit (200 aa).

This sequence belongs to the LeuD family. LeuD type 1 subfamily. Heterodimer of LeuC and LeuD.

The enzyme catalyses (2R,3S)-3-isopropylmalate = (2S)-2-isopropylmalate. The protein operates within amino-acid biosynthesis; L-leucine biosynthesis; L-leucine from 3-methyl-2-oxobutanoate: step 2/4. Catalyzes the isomerization between 2-isopropylmalate and 3-isopropylmalate, via the formation of 2-isopropylmaleate. This Campylobacter jejuni (strain RM1221) protein is 3-isopropylmalate dehydratase small subunit.